A 151-amino-acid polypeptide reads, in one-letter code: MESPIRFADVDINTILKTLPHRFPFLLIDRVKNIREDHSGIGVKNVTFNEPAFQGHFPERPVFPGVLMIEGMAQTAGVIGIMSVTGTEKPRAVYFLTIDKCKFRKPVLPGDTIEYHMKSIGRRKTMWWFHGDAIVDGQTVAEADVGAMLTD.

His-56 is a catalytic residue.

This sequence belongs to the thioester dehydratase family. FabZ subfamily.

The protein localises to the cytoplasm. It carries out the reaction a (3R)-hydroxyacyl-[ACP] = a (2E)-enoyl-[ACP] + H2O. Involved in unsaturated fatty acids biosynthesis. Catalyzes the dehydration of short chain beta-hydroxyacyl-ACPs and long chain saturated and unsaturated beta-hydroxyacyl-ACPs. In Rhodopseudomonas palustris (strain HaA2), this protein is 3-hydroxyacyl-[acyl-carrier-protein] dehydratase FabZ.